The chain runs to 249 residues: Secreted flagellin C (249 aa).

In terms of processing, the secreted form is about 1 kDa larger than the whole cell lysate form, presumably due to post-translational modification. A 22 kDa form is also found in the secreted fraction, probably resulting from proteolysis.

The protein localises to the secreted. Its subcellular location is the host cell surface. Functionally, plays a role in virulence. This chain is Secreted flagellin C (flaC), found in Campylobacter jejuni subsp. jejuni serotype O:2 (strain ATCC 700819 / NCTC 11168).